The chain runs to 194 residues: Pyridoxal 5'-phosphate synthase subunit PdxT (194 aa).

50–52 provides a ligand contact to L-glutamine; sequence GES. C82 functions as the Nucleophile in the catalytic mechanism. Residues R109 and 136–137 contribute to the L-glutamine site; that span reads IR. Catalysis depends on charge relay system residues H172 and E174.

This sequence belongs to the glutaminase PdxT/SNO family. In the presence of PdxS, forms a dodecamer of heterodimers. Only shows activity in the heterodimer.

The enzyme catalyses aldehydo-D-ribose 5-phosphate + D-glyceraldehyde 3-phosphate + L-glutamine = pyridoxal 5'-phosphate + L-glutamate + phosphate + 3 H2O + H(+). It catalyses the reaction L-glutamine + H2O = L-glutamate + NH4(+). It participates in cofactor biosynthesis; pyridoxal 5'-phosphate biosynthesis. Catalyzes the hydrolysis of glutamine to glutamate and ammonia as part of the biosynthesis of pyridoxal 5'-phosphate. The resulting ammonia molecule is channeled to the active site of PdxS. The polypeptide is Pyridoxal 5'-phosphate synthase subunit PdxT (Streptococcus pneumoniae (strain CGSP14)).